The chain runs to 472 residues: Ribosomal protein uS12 methylthiotransferase RimO (472 aa).

In terms of domain architecture, MTTase N-terminal spans 33–143; the sequence is NRIGFVSLGC…VLKHVHKYVP (111 aa). Residues C42, C78, C107, C175, C179, and C182 each contribute to the [4Fe-4S] cluster site. One can recognise a Radical SAM core domain in the interval 161-398; sequence LTPKHYAYLK…MELQAEISAE (238 aa). In terms of domain architecture, TRAM spans 401–467; it reads ARFVGRTLDI…EHDLWAEVVD (67 aa).

The protein belongs to the methylthiotransferase family. RimO subfamily. It depends on [4Fe-4S] cluster as a cofactor.

The protein resides in the cytoplasm. The enzyme catalyses L-aspartate(89)-[ribosomal protein uS12]-hydrogen + (sulfur carrier)-SH + AH2 + 2 S-adenosyl-L-methionine = 3-methylsulfanyl-L-aspartate(89)-[ribosomal protein uS12]-hydrogen + (sulfur carrier)-H + 5'-deoxyadenosine + L-methionine + A + S-adenosyl-L-homocysteine + 2 H(+). Functionally, catalyzes the methylthiolation of an aspartic acid residue of ribosomal protein uS12. The protein is Ribosomal protein uS12 methylthiotransferase RimO of Shewanella putrefaciens (strain CN-32 / ATCC BAA-453).